The chain runs to 293 residues: Pyridoxal 5'-phosphate synthase subunit PdxS (293 aa).

Asp23 is a D-ribose 5-phosphate binding site. Catalysis depends on Lys80, which acts as the Schiff-base intermediate with D-ribose 5-phosphate. A D-ribose 5-phosphate-binding site is contributed by Gly152. Arg164 provides a ligand contact to D-glyceraldehyde 3-phosphate. Residues Gly213 and 234 to 235 (GS) each bind D-ribose 5-phosphate.

The protein belongs to the PdxS/SNZ family. In terms of assembly, in the presence of PdxT, forms a dodecamer of heterodimers.

It catalyses the reaction aldehydo-D-ribose 5-phosphate + D-glyceraldehyde 3-phosphate + L-glutamine = pyridoxal 5'-phosphate + L-glutamate + phosphate + 3 H2O + H(+). The protein operates within cofactor biosynthesis; pyridoxal 5'-phosphate biosynthesis. In terms of biological role, catalyzes the formation of pyridoxal 5'-phosphate from ribose 5-phosphate (RBP), glyceraldehyde 3-phosphate (G3P) and ammonia. The ammonia is provided by the PdxT subunit. Can also use ribulose 5-phosphate and dihydroxyacetone phosphate as substrates, resulting from enzyme-catalyzed isomerization of RBP and G3P, respectively. In Methanothermobacter thermautotrophicus (strain ATCC 29096 / DSM 1053 / JCM 10044 / NBRC 100330 / Delta H) (Methanobacterium thermoautotrophicum), this protein is Pyridoxal 5'-phosphate synthase subunit PdxS.